Reading from the N-terminus, the 317-residue chain is Mitochondrial thiamine pyrophosphate carrier 1 (317 aa).

6 consecutive transmembrane segments (helical) span residues 15–37 (TVSWYNSVIAGSVSGVFARMATA), 80–100 (IPATAMYVVYGAVQFGSYSWF), 118–138 (LTVGALAGMTSSVVSYPLDLL), 168–190 (GFFTGISTAMTTVTLSTAIMFLT), 205–227 (FWSRPVSASSGIIAGFVSKTMVF), and 281–300 (GLTMGLCKSVPTTAISLFVY). 3 Solcar repeats span residues 16 to 103 (VSWY…FNNV), 112 to 197 (SQQG…VNIV), and 206 to 306 (WSRP…TMDL).

It belongs to the mitochondrial carrier (TC 2.A.29) family.

It is found in the mitochondrion inner membrane. Its function is as follows. Mitochondrial transporter that mediates uptake of thiamine pyrophosphate (ThPP) into mitochondria. This Kluyveromyces lactis (strain ATCC 8585 / CBS 2359 / DSM 70799 / NBRC 1267 / NRRL Y-1140 / WM37) (Yeast) protein is Mitochondrial thiamine pyrophosphate carrier 1 (TPC1).